We begin with the raw amino-acid sequence, 319 residues long: Carbonic anhydrase, chloroplastic (319 aa).

Residues 1-98 (MSTINGCLTS…AASKVAQITS (98 aa)) constitute a chloroplast transit peptide.

Belongs to the beta-class carbonic anhydrase family. In terms of assembly, homohexamer.

The protein resides in the plastid. Its subcellular location is the chloroplast stroma. It carries out the reaction hydrogencarbonate + H(+) = CO2 + H2O. Functionally, reversible hydration of carbon dioxide. This is Carbonic anhydrase, chloroplastic from Spinacia oleracea (Spinach).